The chain runs to 55 residues: Large ribosomal subunit protein bL33 (55 aa).

The protein belongs to the bacterial ribosomal protein bL33 family.

This Orientia tsutsugamushi (strain Boryong) (Rickettsia tsutsugamushi) protein is Large ribosomal subunit protein bL33.